The primary structure comprises 1076 residues: Bifunctional glutamine synthetase adenylyltransferase/adenylyl-removing enzyme (1076 aa).

The interval methionine 1–methionine 521 is adenylyl removase. The segment at valine 524 to arginine 1076 is adenylyl transferase. Over residues alanine 1041–proline 1056 the composition is skewed to low complexity. The interval alanine 1041 to arginine 1076 is disordered.

It belongs to the GlnE family. Mg(2+) is required as a cofactor.

The catalysed reaction is [glutamine synthetase]-O(4)-(5'-adenylyl)-L-tyrosine + phosphate = [glutamine synthetase]-L-tyrosine + ADP. The enzyme catalyses [glutamine synthetase]-L-tyrosine + ATP = [glutamine synthetase]-O(4)-(5'-adenylyl)-L-tyrosine + diphosphate. Involved in the regulation of glutamine synthetase GlnA, a key enzyme in the process to assimilate ammonia. When cellular nitrogen levels are high, the C-terminal adenylyl transferase (AT) inactivates GlnA by covalent transfer of an adenylyl group from ATP to specific tyrosine residue of GlnA, thus reducing its activity. Conversely, when nitrogen levels are low, the N-terminal adenylyl removase (AR) activates GlnA by removing the adenylyl group by phosphorolysis, increasing its activity. The regulatory region of GlnE binds the signal transduction protein PII (GlnB) which indicates the nitrogen status of the cell. This is Bifunctional glutamine synthetase adenylyltransferase/adenylyl-removing enzyme from Bifidobacterium longum subsp. infantis (strain ATCC 15697 / DSM 20088 / JCM 1222 / NCTC 11817 / S12).